We begin with the raw amino-acid sequence, 457 residues long: Argininosuccinate lyase (457 aa).

This sequence belongs to the lyase 1 family. Argininosuccinate lyase subfamily.

It localises to the cytoplasm. The enzyme catalyses 2-(N(omega)-L-arginino)succinate = fumarate + L-arginine. It participates in amino-acid biosynthesis; L-arginine biosynthesis; L-arginine from L-ornithine and carbamoyl phosphate: step 3/3. This Citrobacter koseri (strain ATCC BAA-895 / CDC 4225-83 / SGSC4696) protein is Argininosuccinate lyase.